The primary structure comprises 203 residues: Nucleoside triphosphate pyrophosphatase (203 aa).

Residue aspartate 77 is the Proton acceptor of the active site.

The protein belongs to the Maf family. A divalent metal cation is required as a cofactor.

The protein localises to the cytoplasm. The enzyme catalyses a ribonucleoside 5'-triphosphate + H2O = a ribonucleoside 5'-phosphate + diphosphate + H(+). It catalyses the reaction a 2'-deoxyribonucleoside 5'-triphosphate + H2O = a 2'-deoxyribonucleoside 5'-phosphate + diphosphate + H(+). In terms of biological role, nucleoside triphosphate pyrophosphatase. May have a dual role in cell division arrest and in preventing the incorporation of modified nucleotides into cellular nucleic acids. This Rickettsia felis (strain ATCC VR-1525 / URRWXCal2) (Rickettsia azadi) protein is Nucleoside triphosphate pyrophosphatase.